The following is a 460-amino-acid chain: Cobyrinate a,c-diamide synthase (460 aa).

The GATase cobBQ-type domain occupies 248–440; it reads KIAVARDAAF…THFHFGSSTK (193 aa). The active-site Nucleophile is Cys331.

Belongs to the CobB/CbiA family. Mg(2+) is required as a cofactor.

The enzyme catalyses cob(II)yrinate + 2 L-glutamine + 2 ATP + 2 H2O = cob(II)yrinate a,c diamide + 2 L-glutamate + 2 ADP + 2 phosphate + 2 H(+). Its pathway is cofactor biosynthesis; adenosylcobalamin biosynthesis; cob(II)yrinate a,c-diamide from sirohydrochlorin (anaerobic route): step 10/10. Catalyzes the ATP-dependent amidation of the two carboxylate groups at positions a and c of cobyrinate, using either L-glutamine or ammonia as the nitrogen source. This chain is Cobyrinate a,c-diamide synthase, found in Priestia megaterium (Bacillus megaterium).